Consider the following 392-residue polypeptide: Tryptophan synthase beta chain (392 aa).

Lys84 bears the N6-(pyridoxal phosphate)lysine mark.

Belongs to the TrpB family. In terms of assembly, tetramer of two alpha and two beta chains. Requires pyridoxal 5'-phosphate as cofactor.

The catalysed reaction is (1S,2R)-1-C-(indol-3-yl)glycerol 3-phosphate + L-serine = D-glyceraldehyde 3-phosphate + L-tryptophan + H2O. The protein operates within amino-acid biosynthesis; L-tryptophan biosynthesis; L-tryptophan from chorismate: step 5/5. In terms of biological role, the beta subunit is responsible for the synthesis of L-tryptophan from indole and L-serine. In Campylobacter jejuni subsp. doylei (strain ATCC BAA-1458 / RM4099 / 269.97), this protein is Tryptophan synthase beta chain.